A 510-amino-acid polypeptide reads, in one-letter code: ATP synthase subunit alpha, chloroplastic (510 aa).

170-177 is an ATP binding site; the sequence is GDRQTGKT.

The protein belongs to the ATPase alpha/beta chains family. In terms of assembly, F-type ATPases have 2 components, CF(1) - the catalytic core - and CF(0) - the membrane proton channel. CF(1) has five subunits: alpha(3), beta(3), gamma(1), delta(1), epsilon(1). CF(0) has four main subunits: a, b, b' and c.

The protein localises to the plastid. It is found in the chloroplast thylakoid membrane. The catalysed reaction is ATP + H2O + 4 H(+)(in) = ADP + phosphate + 5 H(+)(out). Functionally, produces ATP from ADP in the presence of a proton gradient across the membrane. The alpha chain is a regulatory subunit. The chain is ATP synthase subunit alpha, chloroplastic from Lotus japonicus (Lotus corniculatus var. japonicus).